The chain runs to 275 residues: Nitrogenase iron protein 3 (275 aa).

An ATP-binding site is contributed by 9–16 (GKGGIGKS). Residue cysteine 97 participates in [4Fe-4S] cluster binding. At arginine 100 the chain carries ADP-ribosylarginine; by dinitrogenase reductase ADP-ribosyltransferase. Cysteine 132 contributes to the [4Fe-4S] cluster binding site.

This sequence belongs to the NifH/BchL/ChlL family. In terms of assembly, homodimer. Requires [4Fe-4S] cluster as cofactor. Post-translationally, the reversible ADP-ribosylation of Arg-100 inactivates the nitrogenase reductase and regulates nitrogenase activity.

It carries out the reaction N2 + 8 reduced [2Fe-2S]-[ferredoxin] + 16 ATP + 16 H2O = H2 + 8 oxidized [2Fe-2S]-[ferredoxin] + 2 NH4(+) + 16 ADP + 16 phosphate + 6 H(+). Functionally, the key enzymatic reactions in nitrogen fixation are catalyzed by the nitrogenase complex, which has 2 components: the iron protein (component 2) and a component 1 which is either a molybdenum-iron protein, a vanadium-iron, or an iron-iron protein. This Azotobacter vinelandii protein is Nitrogenase iron protein 3 (anfH).